Reading from the N-terminus, the 323-residue chain is Dihydrodiol dehydrogenase 3 (323 aa).

Residues Gly-20–Phe-24 and Asp-50 contribute to the NADP(+) site. The Proton donor role is filled by Tyr-55. His-117 lines the substrate pocket. Residues Ser-166 to Asn-167, Gln-190, Tyr-216 to Ser-221, and Lys-270 to Asn-280 each bind NADP(+).

The protein belongs to the aldo/keto reductase family.

It localises to the cytoplasm. The protein is Dihydrodiol dehydrogenase 3 of Bos taurus (Bovine).